A 508-amino-acid polypeptide reads, in one-letter code: Zinc finger CCCH-type with G patch domain-containing protein (508 aa).

Residues 154-177 form a C3H1-type zinc finger; the sequence is PCNYYLEGECRFDETRCRYSHGAL. The interval 253-279 is disordered; it reads DDELSSDSEETNETDGSDAANESDMDD. In terms of domain architecture, G-patch spans 309–355; it reads TRGIGSKLMASMGYIHGTGLGSDGRGIVTPVSAQILPQGRSLDACME. Residues 486–495 are compositionally biased toward polar residues; that stretch reads QAQESSLSKE. Positions 486 to 508 are disordered; the sequence is QAQESSLSKEQQTRKSKNKMFEF. The span at 499–508 shows a compositional bias: basic residues; it reads RKSKNKMFEF.

The protein resides in the nucleus. In terms of biological role, transcription repressor. The polypeptide is Zinc finger CCCH-type with G patch domain-containing protein (Drosophila virilis (Fruit fly)).